A 360-amino-acid chain; its full sequence is UDP-N-acetylglucosamine--N-acetylmuramyl-(pentapeptide) pyrophosphoryl-undecaprenol N-acetylglucosamine transferase (360 aa).

UDP-N-acetyl-alpha-D-glucosamine-binding positions include 15-17 (TGG), Asn-128, Arg-164, Ser-192, Ile-247, and Gln-292.

The protein belongs to the glycosyltransferase 28 family. MurG subfamily.

The protein resides in the cell inner membrane. The enzyme catalyses di-trans,octa-cis-undecaprenyl diphospho-N-acetyl-alpha-D-muramoyl-L-alanyl-D-glutamyl-meso-2,6-diaminopimeloyl-D-alanyl-D-alanine + UDP-N-acetyl-alpha-D-glucosamine = di-trans,octa-cis-undecaprenyl diphospho-[N-acetyl-alpha-D-glucosaminyl-(1-&gt;4)]-N-acetyl-alpha-D-muramoyl-L-alanyl-D-glutamyl-meso-2,6-diaminopimeloyl-D-alanyl-D-alanine + UDP + H(+). The protein operates within cell wall biogenesis; peptidoglycan biosynthesis. Its function is as follows. Cell wall formation. Catalyzes the transfer of a GlcNAc subunit on undecaprenyl-pyrophosphoryl-MurNAc-pentapeptide (lipid intermediate I) to form undecaprenyl-pyrophosphoryl-MurNAc-(pentapeptide)GlcNAc (lipid intermediate II). This chain is UDP-N-acetylglucosamine--N-acetylmuramyl-(pentapeptide) pyrophosphoryl-undecaprenol N-acetylglucosamine transferase, found in Blochmanniella floridana.